The sequence spans 957 residues: Thioredoxin domain-containing protein 11 (957 aa).

The span at 1–13 (MSECGGRGGGGGS) shows a compositional bias: gly residues. Residues 1 to 47 (MSECGGRGGGGGSSSSSDDAEDEGGGGGPAGSGSLSPAPAASSEGRL) are disordered. The span at 32–44 (SGSLSPAPAASSE) shows a compositional bias: low complexity. A helical membrane pass occupies residues 64-84 (LLCGAVALGCALLLALKFTCS). The Thioredoxin 1 domain occupies 91-213 (IPAKPPVSFF…IEKFVRRVMK (123 aa)). 2 cysteine pairs are disulfide-bonded: cysteine 441-cysteine 444 and cysteine 691-cysteine 694. The 151-residue stretch at 621-771 (LDPKQALMKF…LLRFILHHSD (151 aa)) folds into the Thioredoxin 2 domain. A coiled-coil region spans residues 785–889 (AECLQNEAVL…ADASETLLTE (105 aa)). The span at 904 to 925 (LEGRDGADDRVPPSKARSEHPE) shows a compositional bias: basic and acidic residues. The disordered stretch occupies residues 904–957 (LEGRDGADDRVPPSKARSEHPEPPGAPRLPASTPLPANISSTLASEGSPENRTD). The span at 941–951 (NISSTLASEGS) shows a compositional bias: polar residues.

It belongs to the protein disulfide isomerase family. Interacts with the cytoplasmic part of DUOX1 and DUOX2. Interacts with TPO and CYBA.

The protein localises to the endoplasmic reticulum membrane. In terms of biological role, may act as a redox regulator involved in DUOX proteins folding. The interaction with DUOX1 and DUOX2 suggest that it belongs to a multiprotein complex constituting the thyroid H(2)O(2) generating system. It is however not sufficient to assist DUOX1 and DUOX2 in H(2)O(2) generation. The polypeptide is Thioredoxin domain-containing protein 11 (TXNDC11) (Bos taurus (Bovine)).